The sequence spans 835 residues: MGILNKIFGTYSERELRRVNPIVNKIEALDEKMQSLKDEDFKLKTEEFKSRLEKGEKLDDILPEAFALVREAAHRTIGLKHYREQLIGGVVLHQGRIGEMKTGEGKTLVATLPAYVNALTGEGVHIVTVNDYLAKRDRDLMAPVYEFLGLKVGVILHNLNNEERQEAYGSDITYGTNSEFGFDYLRDNMVVYKEERVQRKLNFSIVDEVDSILIDEARTPLIISGQGEKSTEFYKVADYFTKSLIAEKDFTIDEKANSAMLTDEGVNKAENFFKVDNYADAENMEIQHHVVQALKANYVMKKDKDYMIKDGEILIVDEFTGRAMEGRRYSDGLHQAIEAKEGVRVERESKTLATITYQNYFRMYNKLSGMTGTAQTEENEFREIYGLDVIVIPTHEPIARIDNADVVYKSEKGKFKAIVDEIVERYKKGQPMLVGTVSIEKSEMLSSMLKKKGVPHQVLNAKYHEKEAEIISHAGEYGMVTIATNMAGRGTDIKLTKEAEEAGGLMIIGTERHESRRIDNQLRGRSGRQGDPGESRFFVSLEDDLMRIFGSERIQGIVDKLGLAEDEAIESKMVSSAIESAQKKVEGNNFDIRKTLLQYDDVINKQREIIYKQRSEVLEGEDLKDQIRDMIRDVAYTAVNSHISGVEEEFETELQNLVNYLEDICLPKALVKVKDISNLSDEEIKEKLLEAVENIYSNKEKEIGEEQIREIERVILLRVVDTKWMDHIDDMDHLKQGIGLRAYRQQDPVQAYQFEGSEMFEEMIYNIKVDTVRYLFHVEIEKAPEREKVAKETSTNYDEDSVKKQPIKKENRIGRNDMCPCGSGKKYKNCCGRMA.

ATP contacts are provided by residues Q85, 103 to 107 (GEGKT), and D492. Zn(2+) contacts are provided by C819, C821, C830, and C831.

Belongs to the SecA family. In terms of assembly, monomer and homodimer. Part of the essential Sec protein translocation apparatus which comprises SecA, SecYEG and auxiliary proteins SecDF. Other proteins may also be involved. Zn(2+) serves as cofactor.

Its subcellular location is the cell membrane. The protein resides in the cytoplasm. It catalyses the reaction ATP + H2O + cellular proteinSide 1 = ADP + phosphate + cellular proteinSide 2.. Part of the Sec protein translocase complex. Interacts with the SecYEG preprotein conducting channel. Has a central role in coupling the hydrolysis of ATP to the transfer of proteins into and across the cell membrane, serving as an ATP-driven molecular motor driving the stepwise translocation of polypeptide chains across the membrane. This is Protein translocase subunit SecA from Clostridium botulinum (strain Okra / Type B1).